A 371-amino-acid chain; its full sequence is Alanine racemase (371 aa).

K40 functions as the Proton acceptor; specific for D-alanine in the catalytic mechanism. N6-(pyridoxal phosphate)lysine is present on K40. R138 is a binding site for substrate. Y267 serves as the catalytic Proton acceptor; specific for L-alanine. M314 provides a ligand contact to substrate.

This sequence belongs to the alanine racemase family. The cofactor is pyridoxal 5'-phosphate.

It catalyses the reaction L-alanine = D-alanine. It participates in amino-acid biosynthesis; D-alanine biosynthesis; D-alanine from L-alanine: step 1/1. Functionally, catalyzes the interconversion of L-alanine and D-alanine. May also act on other amino acids. The sequence is that of Alanine racemase (alr) from Ligilactobacillus salivarius (strain UCC118) (Lactobacillus salivarius).